The sequence spans 463 residues: MSEPIKNIVLVGRTGNGKSSTGNTLLGTKQFKSKNQAKGVTMICEMYRAAIQDGPIINVIDTPGLCDSFVPGDDISNEIINCLTMAEEGIHAVLLVLSARGRISKEEESTVNTLQCIFGSQILDYCIVVFTGGDDLEEDDQTLDDYFRAGCPEFLTKVLRLCGGRKVLFDNKSKDEKKKVEQVKQLLARVENVGEQTGGIPYTYQLHRKIKEENDERLREEERVIESKNRAEAELAEMQQNLLMEKEKLQMEEAKNKQLIAQAEANEKLMEQERAKNRAETELAAVMVEKLQMEEEKNKQLIAQANRMICARDLNIEWSHSEEHWKWVNLDHNISSNTFVEVAELLGVYWFDVSGSLDTTEMAPWTHYEVLFVVNLKDSAFKWNAAVKMNLFYINSRPGGPGTQERAVDMRQHIGKGWVTIHAGEFITTPENVGLIGFRMSEVDSGDNRGGLIVKGVLIRPIN.

Residues 3 to 211 enclose the AIG1-type G domain; it reads EPIKNIVLVG…YTYQLHRKIK (209 aa). Residues 12-19 form a G1 region; the sequence is GRTGNGKS. Residues 12–20 and Ser-33 contribute to the GTP site; that span reads GRTGNGKSS. Residues 39-43 form a G2 region; sequence GVTMI. The G3 stretch occupies residues 61–64; that stretch reads DTPG. The segment at 131-134 is G4; the sequence is TGGD. Residues 170–172 are G5; sequence DNK. Asn-171 serves as a coordination point for GTP. Residues 173–308 are a coiled coil; sequence SKDEKKKVEQ…KQLIAQANRM (136 aa).

It belongs to the TRAFAC class TrmE-Era-EngA-EngB-Septin-like GTPase superfamily. AIG1/Toc34/Toc159-like paraseptin GTPase family. IAN subfamily. Expressed in radicles of the germinating seeds.

The sequence is that of Immune-associated nucleotide-binding protein 10 from Arabidopsis thaliana (Mouse-ear cress).